Here is a 263-residue protein sequence, read N- to C-terminus: MVAAVARLWWRGLLGASALTRGAGRPSVLLLPVRRESAGADTRPTVRPRNDVAHQQLSAFGEYVAEILPKYVQQVQVSCFNELEVCIHPDGVIPVLTFLRDHTNAQFKSLVDLTAVDVPTRQNRFEIVYNLLSLRFNSRIRVKTYTDELTPIESAVSVFKAANWYEREIWDMFGVFFANHPDLRRILTDYGFEGHPFRKDFPLSGYVELRYDDEVKRVVAEPVELAQEFRKFDLNSPWEAFPVYRQPPESLKLEAGDKKPDAK.

A mitochondrion-targeting transit peptide spans 1–35 (MVAAVARLWWRGLLGASALTRGAGRPSVLLLPVRR).

The protein belongs to the complex I 30 kDa subunit family. As to quaternary structure, core subunit of respiratory chain NADH dehydrogenase (Complex I) which is composed of 45 different subunits. Interacts with NDUFAF3. Interacts with RAB5IF. Found in subcomplexes containing subunits NDUFS2, MT-ND1 and NDUFA13.

Its subcellular location is the mitochondrion inner membrane. It carries out the reaction a ubiquinone + NADH + 5 H(+)(in) = a ubiquinol + NAD(+) + 4 H(+)(out). Functionally, core subunit of the mitochondrial membrane respiratory chain NADH dehydrogenase (Complex I) which catalyzes electron transfer from NADH through the respiratory chain, using ubiquinone as an electron acceptor. Essential for the catalytic activity and assembly of complex I. The protein is NADH dehydrogenase [ubiquinone] iron-sulfur protein 3, mitochondrial (NDUFS3) of Pongo pygmaeus (Bornean orangutan).